The following is a 128-amino-acid chain: Small ribosomal subunit protein uS8 (128 aa).

It belongs to the universal ribosomal protein uS8 family. In terms of assembly, part of the 30S ribosomal subunit. Contacts proteins S5 and S12.

In terms of biological role, one of the primary rRNA binding proteins, it binds directly to 16S rRNA central domain where it helps coordinate assembly of the platform of the 30S subunit. The chain is Small ribosomal subunit protein uS8 from Methylacidiphilum infernorum (isolate V4) (Methylokorus infernorum (strain V4)).